The primary structure comprises 531 residues: Protein RPN4 (531 aa).

Positions 338–432 (RFPSPSTSAN…PSAHTSSSDG (95 aa)) are disordered. Residues 341–354 (SPSTSANVPSTATT) show a composition bias toward polar residues. Residues 362–375 (SSSNRSCVSNSNEN) show a composition bias toward low complexity. The Nuclear localization signal signature appears at 382-398 (KKPTSAVVSSNASRRKL). The segment covering 394–407 (SRRKLINYTKKHLS) has biased composition (basic residues). Residues 408–430 (SHSSTNSNSKPSTASPSAHTSSS) show a composition bias toward low complexity.

Probably interacts with SEC63. Interacts with MUB1, UBR2 and RPN2. Post-translationally, ubiquitinated by UBR2 in the presence of UBC2; which leads to proteasomal degradation.

The protein resides in the nucleus. Its function is as follows. Acts as a transcriptional activator of a number of genes encoding proteasomal subunits. Binds to a PACE (proteasome-associated control element) DNA sequence 5'-GGTGGCAAA-3'. Its expression is in turn regulated by the 26S proteasome, thereby providing a negative feedback control mechanism. Required for normal growth at low temperatures. The polypeptide is Protein RPN4 (RPN4) (Saccharomyces cerevisiae (strain ATCC 204508 / S288c) (Baker's yeast)).